The sequence spans 309 residues: Ribosomal RNA small subunit methyltransferase H (309 aa).

Residues 39 to 41 (GGH), Asp-59, Phe-83, Asp-100, and Gln-107 each bind S-adenosyl-L-methionine.

It belongs to the methyltransferase superfamily. RsmH family.

The protein resides in the cytoplasm. It catalyses the reaction cytidine(1402) in 16S rRNA + S-adenosyl-L-methionine = N(4)-methylcytidine(1402) in 16S rRNA + S-adenosyl-L-homocysteine + H(+). Specifically methylates the N4 position of cytidine in position 1402 (C1402) of 16S rRNA. The polypeptide is Ribosomal RNA small subunit methyltransferase H (Delftia acidovorans (strain DSM 14801 / SPH-1)).